The primary structure comprises 220 residues: Ribose-5-phosphate isomerase A (220 aa).

Substrate-binding positions include 25-28 (TGST), 80-83 (DGAD), and 93-96 (KGGG). The active-site Proton acceptor is the Glu-102. A substrate-binding site is contributed by Lys-120.

Belongs to the ribose 5-phosphate isomerase family. In terms of assembly, homodimer.

The enzyme catalyses aldehydo-D-ribose 5-phosphate = D-ribulose 5-phosphate. It participates in carbohydrate degradation; pentose phosphate pathway; D-ribose 5-phosphate from D-ribulose 5-phosphate (non-oxidative stage): step 1/1. Catalyzes the reversible conversion of ribose-5-phosphate to ribulose 5-phosphate. This Bacillus thuringiensis subsp. konkukian (strain 97-27) protein is Ribose-5-phosphate isomerase A.